We begin with the raw amino-acid sequence, 97 residues long: Aspartyl/glutamyl-tRNA(Asn/Gln) amidotransferase subunit C (97 aa).

Belongs to the GatC family. As to quaternary structure, heterotrimer of A, B and C subunits.

The enzyme catalyses L-glutamyl-tRNA(Gln) + L-glutamine + ATP + H2O = L-glutaminyl-tRNA(Gln) + L-glutamate + ADP + phosphate + H(+). It carries out the reaction L-aspartyl-tRNA(Asn) + L-glutamine + ATP + H2O = L-asparaginyl-tRNA(Asn) + L-glutamate + ADP + phosphate + 2 H(+). Functionally, allows the formation of correctly charged Asn-tRNA(Asn) or Gln-tRNA(Gln) through the transamidation of misacylated Asp-tRNA(Asn) or Glu-tRNA(Gln) in organisms which lack either or both of asparaginyl-tRNA or glutaminyl-tRNA synthetases. The reaction takes place in the presence of glutamine and ATP through an activated phospho-Asp-tRNA(Asn) or phospho-Glu-tRNA(Gln). In Roseiflexus sp. (strain RS-1), this protein is Aspartyl/glutamyl-tRNA(Asn/Gln) amidotransferase subunit C.